We begin with the raw amino-acid sequence, 295 residues long: GTPase Era (295 aa).

An Era-type G domain is found at 7-176 (KTISVCIIGR…IKSKAKVSPW (170 aa)). Residues 15-22 (GRPNSGKS) form a G1 region. A GTP-binding site is contributed by 15 to 22 (GRPNSGKS). Residues 41–45 (QTTRS) form a G2 region. The G3 stretch occupies residues 62–65 (DTPG). Residues 62–66 (DTPGI) and 124–127 (NKID) contribute to the GTP site. The G4 stretch occupies residues 124–127 (NKID). The G5 stretch occupies residues 152–154 (ISA). Positions 204-281 (LQQELPYKLT…HLFLFVKVHA (78 aa)) constitute a KH type-2 domain.

Belongs to the TRAFAC class TrmE-Era-EngA-EngB-Septin-like GTPase superfamily. Era GTPase family. Monomer.

It localises to the cytoplasm. The protein localises to the cell inner membrane. Functionally, an essential GTPase that binds both GDP and GTP, with rapid nucleotide exchange. Plays a role in 16S rRNA processing and 30S ribosomal subunit biogenesis and possibly also in cell cycle regulation and energy metabolism. The protein is GTPase Era of Rickettsia prowazekii (strain Madrid E).